The sequence spans 389 residues: Coproporphyrin III ferrochelatase (389 aa).

Residues Ser-70 and Tyr-139 each coordinate Fe-coproporphyrin III. His-205 is a Fe(2+) binding site. Residues 207–229 (IPSTDAGKSGPSGRPDSGEPWGE) form a disordered region. A Fe(2+)-binding site is contributed by Glu-303.

The protein belongs to the ferrochelatase family.

The protein resides in the cytoplasm. The enzyme catalyses Fe-coproporphyrin III + 2 H(+) = coproporphyrin III + Fe(2+). The protein operates within porphyrin-containing compound metabolism; protoheme biosynthesis. Its function is as follows. Involved in coproporphyrin-dependent heme b biosynthesis. Catalyzes the insertion of ferrous iron into coproporphyrin III to form Fe-coproporphyrin III. This Leifsonia xyli subsp. xyli (strain CTCB07) protein is Coproporphyrin III ferrochelatase.